The following is a 22-amino-acid chain: Hemocyanin subunit 4 (22 aa).

The protein belongs to the tyrosinase family. Hemocyanin subfamily. Hemolymph.

It localises to the secreted. The protein resides in the extracellular space. Hemocyanins are copper-containing oxygen carriers occurring freely dissolved in the hemolymph of many mollusks and arthropods. The protein is Hemocyanin subunit 4 of Homarus americanus (American lobster).